Reading from the N-terminus, the 663-residue chain is Methionine--tRNA ligase (663 aa).

A 'HIGH' region motif is present at residues 10–20 (AYTNGPLHLGH). The Zn(2+) site is built by Cys-142, Cys-145, Cys-154, and Cys-157. A 'KMSKS' region motif is present at residues 323–327 (KMSTS). An ATP-binding site is contributed by Thr-326. One can recognise a tRNA-binding domain in the interval 563–663 (YFTKVDLRVG…REISLGSKIH (101 aa)).

This sequence belongs to the class-I aminoacyl-tRNA synthetase family. MetG type 1 subfamily. Homodimer. Zn(2+) serves as cofactor.

It localises to the cytoplasm. The catalysed reaction is tRNA(Met) + L-methionine + ATP = L-methionyl-tRNA(Met) + AMP + diphosphate. Is required not only for elongation of protein synthesis but also for the initiation of all mRNA translation through initiator tRNA(fMet) aminoacylation. This chain is Methionine--tRNA ligase, found in Methanococcus vannielii (strain ATCC 35089 / DSM 1224 / JCM 13029 / OCM 148 / SB).